The primary structure comprises 342 residues: uncharacterized protein (342 aa).

10 consecutive transmembrane segments (helical) span residues 8 to 28 (FESS…TSLF), 39 to 59 (ISFL…MLWI), 79 to 99 (SSFS…FILI), 108 to 128 (IFWV…PFYM), 142 to 162 (GWYI…LIMP), 175 to 195 (INYF…AVVI), 207 to 227 (AMAP…VALI), 242 to 262 (FYIF…MAII), 276 to 296 (AMSW…THLV), and 304 to 324 (IVDY…IVTL).

Belongs to the tellurite-resistance/dicarboxylate transporter (TDT) family.

Its subcellular location is the cell membrane. This is an uncharacterized protein from Methanocaldococcus jannaschii (strain ATCC 43067 / DSM 2661 / JAL-1 / JCM 10045 / NBRC 100440) (Methanococcus jannaschii).